A 108-amino-acid chain; its full sequence is uncharacterized protein (108 aa).

Positions 56–108 (ELPSRGCLPAPRPESGQGRLSTGISQNGGRSSAQPCPRCIAGESGHFSHTKNH) are disordered. The span at 73–89 (GRLSTGISQNGGRSSAQ) shows a compositional bias: polar residues.

This is an uncharacterized protein from Homo sapiens (Human).